The sequence spans 147 residues: Large ribosomal subunit protein uL15 (147 aa).

The interval M1 to R42 is disordered.

It belongs to the universal ribosomal protein uL15 family. In terms of assembly, part of the 50S ribosomal subunit.

Functionally, binds to the 23S rRNA. The protein is Large ribosomal subunit protein uL15 of Salinispora arenicola (strain CNS-205).